Reading from the N-terminus, the 843-residue chain is Adenylate cyclase (843 aa).

The catalytic stretch occupies residues 1-542; it reads MECNLAQAKQ…NLRQSFPSTI (542 aa). The segment at 549–843 is regulatory; it reads SDLLNQCEIR…VPFKFRQMNK (295 aa).

The protein belongs to the adenylyl cyclase class-1 family.

The protein localises to the cytoplasm. It catalyses the reaction ATP = 3',5'-cyclic AMP + diphosphate. Its function is as follows. Plays an essential role in competence development. In Haemophilus influenzae (strain ATCC 51907 / DSM 11121 / KW20 / Rd), this protein is Adenylate cyclase (cyaA).